Consider the following 174-residue polypeptide: Large ribosomal subunit protein uL18 (174 aa).

The protein belongs to the universal ribosomal protein uL18 family. Part of the 50S ribosomal subunit. Contacts the 5S and 23S rRNAs.

In terms of biological role, this is one of the proteins that bind and probably mediate the attachment of the 5S RNA into the large ribosomal subunit, where it forms part of the central protuberance. This is Large ribosomal subunit protein uL18 from Methanocorpusculum labreanum (strain ATCC 43576 / DSM 4855 / Z).